A 580-amino-acid polypeptide reads, in one-letter code: MNLFTEIRSLVTAELGAMAEAGELPAGLDLSAVAVEPPRDPAHGDMATNAAMVLAKPAGKPPRAIAEALATRLAADPRILSAEVAGPGFLNLRLRPAVWQGLVARVLQAGDAYGRSTIGAGQRVNVEFVSANPTGPMHVGHVRGAVVGDALARLLVFAGWDVTREYYINDGGAQVDVLARSAYERYREAHGLEPEIREGLYPGDYLIPVGEALKAKYGDSLLDKGEHCWLTDVREFATEMMMQMIREDLAALGVEMDVYSSEKALYGTGKIEAALQRLQDMGLIYEGVLEPPKGKTPEDWEPREQTLFRSTAHGDDVDRPVKKSDGSWTYFAPDIAYHYDKVTRGFDQLIDIFGADHGGYVKRMKAAVAALSDGRVPLDIKLIQLVKLWKNGEPFKMSKRAGTYVTLRDVVEQVGADVTRFVMLTRKNDAALDFDFDKVLEQSKENPVFYVQYANARINSVLRKAREQGMDVADAALACADLDRLDHPAEIALIAKLAEWPRLVEIAARTNEPHRIAFYLHELSSDLHGLWNRGNDEPGLRFLQDDPVVSQAKIALARAVGVVICAGLGILGVTPVEEMR.

A 'HIGH' region motif is present at residues Ala-131 to His-141.

Belongs to the class-I aminoacyl-tRNA synthetase family. Monomer.

The protein localises to the cytoplasm. The catalysed reaction is tRNA(Arg) + L-arginine + ATP = L-arginyl-tRNA(Arg) + AMP + diphosphate. The protein is Arginine--tRNA ligase of Cereibacter sphaeroides (strain ATCC 17025 / ATH 2.4.3) (Rhodobacter sphaeroides).